A 184-amino-acid polypeptide reads, in one-letter code: Tumor necrosis factor receptor superfamily member 13C (184 aa).

Topologically, residues 1–78 (MRRGPRSLRG…EAALPLPGLL (78 aa)) are extracellular. The stretch at 18–35 (PCVPAECFDLLVRHCVAC) is one TNFR-Cys; truncated repeat. 2 disulfide bridges follow: C19–C32 and C24–C35. The segment at 26–31 (DLLVRH) is essential for TNFSF13B/TALL1/BAFF/BLyS binding. The tract at residues 43–62 (PKPAGASSPAPRTALQPQES) is disordered. A helical; Signal-anchor for type III membrane protein membrane pass occupies residues 79–99 (FGAPALLGLALVLALVLVGLV). The Cytoplasmic portion of the chain corresponds to 100–184 (SWRRRQRRLR…TTKTAGPEQQ (85 aa)). The interval 107–184 (RLRGASSAEA…TTKTAGPEQQ (78 aa)) is disordered. Positions 118–128 (DGDKDAPEPLD) are enriched in basic and acidic residues. Over residues 168–184 (LGSTELVTTKTAGPEQQ) the composition is skewed to polar residues.

Highly expressed in spleen and lymph node, and in resting B-cells. Detected at lower levels in activated B-cells, resting CD4+ T-cells, in thymus and peripheral blood leukocytes.

Its subcellular location is the membrane. B-cell receptor specific for TNFSF13B/TALL1/BAFF/BLyS. Promotes the survival of mature B-cells and the B-cell response. This chain is Tumor necrosis factor receptor superfamily member 13C (TNFRSF13C), found in Homo sapiens (Human).